Here is an 85-residue protein sequence, read N- to C-terminus: Putative membrane protein insertion efficiency factor (85 aa).

This sequence belongs to the UPF0161 family.

Its subcellular location is the cell inner membrane. In terms of biological role, could be involved in insertion of integral membrane proteins into the membrane. In Shewanella sediminis (strain HAW-EB3), this protein is Putative membrane protein insertion efficiency factor.